Here is a 973-residue protein sequence, read N- to C-terminus: GATOR2 complex protein WDR59 (973 aa).

WD repeat units follow at residues 57–98 (QSKW…GEVC), 103–143 (GHTR…KPTV), 146–185 (SAVAGASQVKWNKKNANCLATSHDGDVRIWDKRKPSTAVE), 189–229 (AHLS…KYLN), 232–276 (PCQV…TPVH), and 280–324 (GHDD…QRLC). The tract at residues 346–365 (DKALQPQDSEPQHSSGHGDE) is disordered. Positions 351 to 360 (PQDSEPQHSS) are enriched in polar residues. Residues 393–494 (QEFSLINVQI…RQLVSWLESV (102 aa)) enclose the RWD domain. A C4-type zinc finger spans residues 900 to 920 (YCSHCRSEARGTQCAICKGFT). Residues Cys-901, Cys-904, Cys-913, Cys-916, Cys-926, Cys-937, His-942, His-945, His-948, Cys-959, Cys-963, Cys-965, and Cys-967 each coordinate Zn(2+). An RING-type; atypical zinc finger spans residues 921 to 970 (FQCAICHVAVRGSSNFCLTCGHGGHTSHMMEWFRTQEVCPTGCGCHCLLE).

Belongs to the WD repeat WDR59 family. Component of the GATOR2 subcomplex, composed of MIOS, SEC13, SEH1L, WDR24 and WDR59. The GATOR2 complex interacts with CASTOR1 and CASTOR2; the interaction is negatively regulated by arginine. The GATOR2 complex interacts with SESN1, SESN2 and SESN3; the interaction is negatively regulated by amino acids. Interacts with DDB1-CUL4A/B E3 ligase complexes.

The protein localises to the lysosome membrane. Its activity is regulated as follows. The GATOR2 complex is negatively regulated by the upstream amino acid sensors CASTOR1 and SESN2, which sequester the GATOR2 complex in absence of amino acids. In the presence of abundant amino acids, GATOR2 is released from CASTOR1 and SESN2 and activated. Its function is as follows. As a component of the GATOR2 complex, functions as an activator of the amino acid-sensing branch of the mTORC1 signaling pathway. The GATOR2 complex indirectly activates mTORC1 through the inhibition of the GATOR1 subcomplex. GATOR2 probably acts as an E3 ubiquitin-protein ligase toward GATOR1. In the presence of abundant amino acids, the GATOR2 complex mediates ubiquitination of the NPRL2 core component of the GATOR1 complex, leading to GATOR1 inactivation. In the absence of amino acids, GATOR2 is inhibited, activating the GATOR1 complex. The protein is GATOR2 complex protein WDR59 of Gallus gallus (Chicken).